Reading from the N-terminus, the 71-residue chain is MIQQEEIRKLEEEKKQLEGEIIDFYKMKAASEALQTQLSTDTKKDKHPDPYEFLLLRKIKHPGFNEELSPC.

Interacts with IGF2BP1 (via KH3 and KH4 domains); the interaction results in increased binding of IGF2BP1 to N6-methyladenosine (m6A)-containing mRNAs. In terms of tissue distribution, detected in colon (at protein level).

Enhances binding of IGF2BP1 to N6-methyladenosine (m6A)-containing mRNAs, thereby contributing to increased mRNA stability. Also increases the interaction of IGF2BP1 with RNA stabilizers ELAVL1/HUR, MATR3 and PABPC1, and increases the interaction of RNA stabilizers ELAVL1/HUR, MATR3 and PABPC1 with m6A-containing mRNAs. Contributes to MYC stability by enhancing binding of IGF2BP1 to m6A-containing MYC mRNAs and increasing recruitment of RNA stabilizing proteins to m6A-containing MYC mRNAs. The chain is Putative RNA-binding regulatory peptide from Homo sapiens (Human).